A 359-amino-acid polypeptide reads, in one-letter code: 4-galactosyl-N-acetylglucosaminide 3-alpha-L-fucosyltransferase 9 (359 aa).

Topologically, residues 1 to 11 (MTSTSKGILRP) are cytoplasmic. Residues 12–32 (FLIVCIILGCFMACLLIYIKP) form a helical; Signal-anchor for type II membrane protein membrane-spanning segment. The Lumenal portion of the chain corresponds to 33-359 (TNSWIFSPME…VGNLEKWFWN (327 aa)). Residue Asn62 is glycosylated (N-linked (GlcNAc...) asparagine). Positions 63–168 (ETTILVWVWP…RRDSDIQVPY (106 aa)) are acceptor-binding. Position 75 (Gln75) interacts with a beta-D-galactosyl-(1-&gt;4)-N-acetyl-beta-D-glucosaminyl derivative. 3 disulfide bridges follow: Cys82–Cys335, Cys91–Cys338, and Cys190–Cys238. N-linked (GlcNAc...) asparagine glycosylation occurs at Asn101. Residue Glu137 participates in a beta-D-galactosyl-(1-&gt;4)-N-acetyl-beta-D-glucosaminyl derivative binding. Glu137 functions as the Nucleophile in the catalytic mechanism. Glu137 contacts GDP-beta-L-fucose. Asn153 carries N-linked (GlcNAc...) asparagine glycosylation. GDP-beta-L-fucose-binding residues include Tyr168, Val192, Ser194, Asn195, Arg202, Val226, Tyr241, Asn246, Tyr252, Glu255, and Lys256. Positions 169–326 (GFLTVSTNPF…NWRKDFTVNL (158 aa)) are donor-binding. The acceptor-binding stretch occupies residues 327–359 (PRFWESHACLACDHVKRHQEYKSVGNLEKWFWN).

This sequence belongs to the glycosyltransferase 10 family. In terms of assembly, homodimer. Post-translationally, N-glycosylated with complex-type N-glycans. The glycan alpha-D-Man-(1-&gt;3)-beta-D-Man-(1-&gt;4)-GlcNAc-(1-&gt;4)-GlcNAc is attached at Asn-153. In terms of tissue distribution, strongly expressed in forebrain and stomach, lower expression in spleen and peripheral blood leukocytes, and no expression in small intestine, colon, liver, lung, kidney, adrenal cortex or uterus. Highly expressed in granulocytes. Not expressed in monocytes.

It is found in the golgi apparatus. The protein localises to the trans-Golgi network membrane. It localises to the golgi apparatus membrane. It carries out the reaction a beta-D-galactosyl-(1-&gt;4)-N-acetyl-beta-D-glucosaminyl derivative + GDP-beta-L-fucose = a beta-D-galactosyl-(1-&gt;4)-[alpha-L-fucosyl-(1-&gt;3)]-N-acetyl-beta-D-glucosaminyl derivative + GDP + H(+). The catalysed reaction is an alpha-Neu5Ac-(2-&gt;3)-beta-D-Gal-(1-&gt;4)-beta-D-GlcNAc-(1-&gt;3)-beta-D-Gal-(1-&gt;4)-beta-D-GlcNAc derivative + GDP-beta-L-fucose = an alpha-Neu5Ac-(2-&gt;3)-beta-D-Gal-(1-&gt;4)-beta-D-GlcNAc-(1-&gt;3)-beta-D-Gal-(1-&gt;4)-[alpha-L-Fuc-(1-&gt;3)]-beta-D-GlcNAc derivative + GDP + H(+). It catalyses the reaction alpha-N-glycoloylneuraminosyl-(2-&gt;3)-beta-D-galactosyl-(1-&gt;4)-N-acetyl-beta-D-glucosaminyl-(1-&gt;3)-beta-D-galactosyl-(1-&gt;4)-N-acetyl-beta-D-glucosaminyl-(1-&gt;3)-beta-D-galactosyl-(1-&gt;4)-beta-D-glucosyl-(1&lt;-&gt;1')-ceramide + GDP-beta-L-fucose = alpha-N-glycoloylneuraminosyl-(2-&gt;3)-beta-D-galactosyl-(1-&gt;4)-N-acetyl-beta-D-glucosaminyl-(1-&gt;3)-beta-D-galactosyl-(1-&gt;4)-[alpha-L-fucosyl-(1-&gt;3)]-N-acetyl-beta-D-glucosaminyl-(1-&gt;3)-beta-D-galactosyl-(1-&gt;4)-beta-D-glucosyl-(1&lt;-&gt;1')-ceramide + GDP + H(+). The enzyme catalyses alpha-D-galactosyl-(1-&gt;3)-beta-D-galactosyl-(1-&gt;4)-N-acetyl-beta-D-glucosaminyl-(1-&gt;3)-beta-D-galactosyl-(1-&gt;4)-beta-D-glucosyl-(1&lt;-&gt;1')-ceramide + GDP-beta-L-fucose = a neolactoside IV(3)-alpha-Gal,III(3)-alpha-Fuc-nLc4Cer + GDP + H(+). It carries out the reaction a neolactoside nLc4Cer + GDP-beta-L-fucose = a neolactoside III(3)-alpha-Fuc-nLc4Cer + GDP + H(+). The catalysed reaction is an N-acetyl-alpha-neuraminyl-(2-&gt;3)-beta-D-galactosyl-(1-&gt;4)-N-acetyl-beta-D-glucosaminyl derivative + GDP-beta-L-fucose = an alpha-Neu5Ac-(2-&gt;3)-beta-D-Gal-(1-&gt;4)-[alpha-L-Fuc-(1-&gt;3)]-beta-D-GlcNAc derivative + GDP + H(+). It catalyses the reaction beta-D-Gal-(1-&gt;4)-beta-D-GlcNAc-(1-&gt;3)-beta-D-Gal-(1-&gt;4)-D-Glc + GDP-beta-L-fucose = beta-D-Gal-(1-&gt;4)-[alpha-L-Fuc-(1-&gt;3)]-beta-D-GlcNAc-(1-&gt;3)-beta-D-Gal-(1-&gt;4)-D-Glc + GDP + H(+). The enzyme catalyses an alpha-L-Fuc-(1-&gt;2)-beta-D-Gal-(1-&gt;4)-beta-D-GlcNAc derivative + GDP-beta-L-fucose = an alpha-L-Fuc-(1-&gt;2)-beta-D-Gal-(1-&gt;4)-[alpha-L-Fuc-(1-&gt;3)]-beta-D-GlcNAc derivative + GDP + H(+). It participates in protein modification; protein glycosylation. Its pathway is glycolipid biosynthesis. With respect to regulation, activated by Mn2+. Catalyzes alpha(1-&gt;3) linkage of fucosyl moiety transferred from GDP-beta-L-fucose to N-acetyl glucosamine (GlcNAc) within type 2 lactosamine (LacNAc, beta-D-Gal-(1-&gt;4)-beta-D-GlcNAc-) glycan attached to glycolipids and N- or O-linked glycoproteins. Fucosylates distal type 2 LacNAc and its fucosylated (H-type 2 LacNAc) and sialylated (sialyl-type 2 LacNAc) derivatives to form Lewis x (Lex) (CD15) and Lewis y (Ley) antigenic epitopes involved in cell adhesion and differentiation. Generates Lex epitopes in the brain, presumably playing a role in the maintenance of neuronal stemness and neurite outgrowth in progenitor neural cells. Fucosylates the internal type 2 LacNAc unit of the polylactosamine chain to form VIM-2 antigen that serves as recognition epitope for SELE. Can also modify milk oligosaccharides, in particular type 2 tetrasaccharide LNnT. The protein is 4-galactosyl-N-acetylglucosaminide 3-alpha-L-fucosyltransferase 9 of Homo sapiens (Human).